A 404-amino-acid polypeptide reads, in one-letter code: Alkane 1-monooxygenase 1 (404 aa).

Helical transmembrane passes span H25–S45, T47–I67, V94–V114, and I119–L139. Residues H143 and H147 each coordinate Fe cation. Residues T151–I171 form a helical membrane-spanning segment. Residues H173, H177, and H178 each contribute to the Fe cation site. The chain crosses the membrane as a helical span at residues V241–I261. The Fe cation site is built by H317, H320, and H321.

Belongs to the fatty acid desaturase type 1 family. AlkB subfamily. It depends on Fe(3+) as a cofactor.

Its subcellular location is the cell inner membrane. The enzyme catalyses octane + 2 reduced [rubredoxin] + O2 + 2 H(+) = 2 oxidized [rubredoxin] + octan-1-ol + H2O. Its pathway is hydrocarbon metabolism; alkane degradation. In terms of biological role, catalyzes the hydroxylation of n-alkanes and fatty acids in the presence of a NADH-rubredoxin reductase and rubredoxin. It preferably hydroxylases C5-C12 hydrocarbons. This is Alkane 1-monooxygenase 1 (alkB1) from Alcanivorax borkumensis (strain ATCC 700651 / DSM 11573 / NCIMB 13689 / SK2).